The chain runs to 279 residues: Presqualene diphosphate synthase (279 aa).

It belongs to the phytoene/squalene synthase family. HpnD subfamily.

The enzyme catalyses 2 (2E,6E)-farnesyl diphosphate = presqualene diphosphate + diphosphate. The protein operates within secondary metabolite biosynthesis; hopanoid biosynthesis. Its function is as follows. Involved in the biosynthesis of the hopanoid precursor squalene (SQ) from farnesyl diphosphate (FPP). Catalyzes the first step, the formation of presqualene diphosphate (PSPP) from two molecules of FPP. The polypeptide is Presqualene diphosphate synthase (Sinorhizobium fredii (strain NBRC 101917 / NGR234)).